The primary structure comprises 320 residues: Histidine decarboxylase proenzyme (320 aa).

Positions 2–11 are excised as a propeptide; that stretch reads NKNLEANRNR. The residue at position 98 (Ser-98) is a Pyruvic acid (Ser). The active-site Proton donor is the Glu-215.

As to quaternary structure, the proenzyme is a hexamer of identical pi chains; each pi chain monomer is cleaved to form a small (or beta) chain and a large (or alpha) chain by non-hydrolytic self-catalysis. It depends on pyruvate as a cofactor.

The enzyme catalyses L-histidine + H(+) = histamine + CO2. In Clostridium perfringens (strain 13 / Type A), this protein is Histidine decarboxylase proenzyme (hdc).